Reading from the N-terminus, the 183-residue chain is Potassium-transporting ATPase KdpC subunit (183 aa).

A helical transmembrane segment spans residues 11-31; sequence LILLLAVVTGALYPLAVTGVA.

The protein belongs to the KdpC family. In terms of assembly, the system is composed of three essential subunits: KdpA, KdpB and KdpC.

The protein resides in the cell inner membrane. In terms of biological role, part of the high-affinity ATP-driven potassium transport (or Kdp) system, which catalyzes the hydrolysis of ATP coupled with the electrogenic transport of potassium into the cytoplasm. This subunit acts as a catalytic chaperone that increases the ATP-binding affinity of the ATP-hydrolyzing subunit KdpB by the formation of a transient KdpB/KdpC/ATP ternary complex. The sequence is that of Potassium-transporting ATPase KdpC subunit from Pseudomonas putida (strain W619).